The primary structure comprises 191 residues: Adenine phosphoribosyltransferase (191 aa).

This sequence belongs to the purine/pyrimidine phosphoribosyltransferase family. In terms of assembly, homodimer.

The protein resides in the cytoplasm. The enzyme catalyses AMP + diphosphate = 5-phospho-alpha-D-ribose 1-diphosphate + adenine. Its pathway is purine metabolism; AMP biosynthesis via salvage pathway; AMP from adenine: step 1/1. In terms of biological role, catalyzes a salvage reaction resulting in the formation of AMP, that is energically less costly than de novo synthesis. This Clavibacter sepedonicus (Clavibacter michiganensis subsp. sepedonicus) protein is Adenine phosphoribosyltransferase.